A 514-amino-acid chain; its full sequence is MHYSPLTVLALLGGTLLLYCSGLVIYRLVFDPLSKFPGPKLSAATFWYEFYYDVIKKGQFTFKIGEWHKQYGPIIRINPYEIHIDDPEGDFYHTVFSGTGVRDKHFWYASQFGTPESGLGTINHHLHRHRRRALNPSFSKASIVRLTPVIWSKIEKLCSRFDELRGTDQPVNVRLAYTCLTTDVITSYAFNRCWNHLDKPDFSPVWCKTLVNGSKMTRWTKQFPWMLETMKKMPQALVGFFDPGMLLVFDVMNKIHHQILDILNGKQEVEDSATDGLSKSPIPNRTIFHELLKSDLPDYDKTIHHLGQEGQNIIGAGADTTSNALTVITYHLLSNPRVLGKLKEELERAMPDRYGAWDLKVAEGLPYLGGVIQEGLRLAYGASSRLTRVAPEEDLNFDGWFIQKGTPISMTALYMHHNEKIFPNSHTFLPERWTDAPDGGRSLDRYLVSFSKGSRQCIGINLAKVELFLTLATVFRRFEMDLHDTVFERDVQLKHDFFLPQPSMQSNGVRVIFK.

A helical transmembrane segment spans residues 6 to 26; it reads LTVLALLGGTLLLYCSGLVIY. Residue Cys-457 participates in heme binding.

The protein belongs to the cytochrome P450 family. Heme serves as cofactor.

The protein localises to the membrane. It carries out the reaction polyporic acid + reduced [NADPH--hemoprotein reductase] + O2 = ascocorynin + oxidized [NADPH--hemoprotein reductase] + H2O + H(+). It participates in secondary metabolite biosynthesis. In terms of biological role, cytochrome P450 monooxygenase that hydroxylates polyporic acid produced by the nonribosomal peptide synthetase acyN to produce the less toxic metabolite ascocorynin. The hydrophobic substrate polyporic acid might approach the active site from the membrane and, after hydroxylation into ascocorynin, leaves into the cytoplasm. MO6277 appears vital to avoid high-level accumulation of polyporic acid in the fungal membrane. The protein is Cytochrome P450 monooxygenase MO6277 of Ascocoryne sarcoides (Purple jellydisc fungus).